The primary structure comprises 90 residues: DNA-binding protein HU-alpha (90 aa).

It belongs to the bacterial histone-like protein family. As to quaternary structure, heterodimer of an alpha and a beta chain.

Its function is as follows. Histone-like DNA-binding protein which is capable of wrapping DNA to stabilize it, and thus to prevent its denaturation under extreme environmental conditions. This is DNA-binding protein HU-alpha (hupA) from Salmonella typhi.